The primary structure comprises 439 residues: tRNA-2-methylthio-N(6)-dimethylallyladenosine synthase (439 aa).

An MTTase N-terminal domain is found at 5 to 121; the sequence is KKLFIKTYGC…LPELEAKTRA (117 aa). [4Fe-4S] cluster-binding residues include cysteine 14, cysteine 50, cysteine 84, cysteine 159, cysteine 163, and cysteine 166. Residues 145–378 enclose the Radical SAM core domain; that stretch reads AKRGPTAFLT…ITRHQREIQD (234 aa). The region spanning 378-439 is the TRAM domain; it reads DGMVGREVSV…GANSLAGELA (62 aa).

The protein belongs to the methylthiotransferase family. MiaB subfamily. In terms of assembly, monomer. It depends on [4Fe-4S] cluster as a cofactor.

Its subcellular location is the cytoplasm. The enzyme catalyses N(6)-dimethylallyladenosine(37) in tRNA + (sulfur carrier)-SH + AH2 + 2 S-adenosyl-L-methionine = 2-methylsulfanyl-N(6)-dimethylallyladenosine(37) in tRNA + (sulfur carrier)-H + 5'-deoxyadenosine + L-methionine + A + S-adenosyl-L-homocysteine + 2 H(+). Functionally, catalyzes the methylthiolation of N6-(dimethylallyl)adenosine (i(6)A), leading to the formation of 2-methylthio-N6-(dimethylallyl)adenosine (ms(2)i(6)A) at position 37 in tRNAs that read codons beginning with uridine. The protein is tRNA-2-methylthio-N(6)-dimethylallyladenosine synthase of Ruegeria pomeroyi (strain ATCC 700808 / DSM 15171 / DSS-3) (Silicibacter pomeroyi).